A 172-amino-acid polypeptide reads, in one-letter code: Large ribosomal subunit protein uL10 (172 aa).

The protein belongs to the universal ribosomal protein uL10 family. In terms of assembly, part of the ribosomal stalk of the 50S ribosomal subunit. The N-terminus interacts with L11 and the large rRNA to form the base of the stalk. The C-terminus forms an elongated spine to which L12 dimers bind in a sequential fashion forming a multimeric L10(L12)X complex.

Functionally, forms part of the ribosomal stalk, playing a central role in the interaction of the ribosome with GTP-bound translation factors. The polypeptide is Large ribosomal subunit protein uL10 (Macrococcus caseolyticus (strain JCSC5402) (Macrococcoides caseolyticum)).